The chain runs to 279 residues: uncharacterized protein (279 aa).

The N-terminal stretch at 1-31 (MLVQSRTLVTAILSCSLVFGTTVNGASVAIA) is a signal peptide.

This is an uncharacterized protein from Corynebacterium glutamicum (strain ATCC 13032 / DSM 20300 / JCM 1318 / BCRC 11384 / CCUG 27702 / LMG 3730 / NBRC 12168 / NCIMB 10025 / NRRL B-2784 / 534).